The following is a 135-amino-acid chain: MNTATLSSILLESHKPAKLETIPEDSYSSIFVFKWLEYLCERVGHSNVPDVLEFYYNLGWVSDKAIAKLLKFSKGIGLDDDEIETSVGKLTIADHLVSLLFIERLNGKKVSSEALDKLEWEIRRIKKGAEQYYGI.

To M.jannaschii FlaE, also to FlaD.

It is found in the archaeal flagellum. This chain is Putative flagella-related protein E (flaE), found in Methanococcus voltae.